The chain runs to 714 residues: Fatty acid oxidation complex subunit alpha (714 aa).

The segment at 1–190 (MEMASAFTLN…KLGLVDDVVP (190 aa)) is enoyl-CoA hydratase. The tract at residues 306 to 714 (APLNSVGILG…FWKTTATDLQ (409 aa)) is 3-hydroxyacyl-CoA dehydrogenase.

It in the N-terminal section; belongs to the enoyl-CoA hydratase/isomerase family. The protein in the central section; belongs to the 3-hydroxyacyl-CoA dehydrogenase family. As to quaternary structure, heterotetramer of two alpha chains (FadJ) and two beta chains (FadI).

It localises to the cytoplasm. The enzyme catalyses a (3S)-3-hydroxyacyl-CoA = a (2E)-enoyl-CoA + H2O. It catalyses the reaction a 4-saturated-(3S)-3-hydroxyacyl-CoA = a (3E)-enoyl-CoA + H2O. The catalysed reaction is a (3S)-3-hydroxyacyl-CoA + NAD(+) = a 3-oxoacyl-CoA + NADH + H(+). It carries out the reaction (3S)-3-hydroxybutanoyl-CoA = (3R)-3-hydroxybutanoyl-CoA. It participates in lipid metabolism; fatty acid beta-oxidation. Catalyzes the formation of a hydroxyacyl-CoA by addition of water on enoyl-CoA. Also exhibits 3-hydroxyacyl-CoA epimerase and 3-hydroxyacyl-CoA dehydrogenase activities. This chain is Fatty acid oxidation complex subunit alpha, found in Escherichia coli (strain UTI89 / UPEC).